The following is an 88-amino-acid chain: Small ribosomal subunit protein bS20 (88 aa).

The tract at residues 1–25 (MANSAQARKRARQAVAQNAHNSSLR) is disordered.

The protein belongs to the bacterial ribosomal protein bS20 family.

In terms of biological role, binds directly to 16S ribosomal RNA. This chain is Small ribosomal subunit protein bS20, found in Cupriavidus pinatubonensis (strain JMP 134 / LMG 1197) (Cupriavidus necator (strain JMP 134)).